A 995-amino-acid chain; its full sequence is Endo-beta-N-acetylglucosaminidase EndoS (995 aa).

The first 36 residues, 1–36 (MDKHLLVKRTLGCVCAATLMGAALATHHDSLNTVKA), serve as a signal peptide directing secretion. The GH18 domain occupies 112 to 432 (SLYGGYFRTW…KDATDNIFHS (321 aa)). Positions 151, 153, and 186 each coordinate a glycoprotein. The active-site Proton donor is the Glu-235. Asp-237, Gln-303, Tyr-305, Glu-349, Glu-350, Asn-356, and Tyr-402 together coordinate a glycoprotein. LRR repeat units follow at residues 437 to 460 (SKAL…DFPD), 478 to 503 (LERF…KFKK), 562 to 585 (LTGL…DAAT), and 586 to 609 (LTSL…ENRQ). The segment at 765-923 (MVNLAEGATV…VPELQILGYP (159 aa)) is carbohydrate-binding module (CBM). Ca(2+)-binding residues include Lys-786, Asp-789, Gln-791, Pro-915, and Glu-916. The interval 924–995 (LPNADTIMKT…CIEKRQLLKK (72 aa)) is three-helix bundle (3H).

It belongs to the glycosyl hydrolase 18 family. In terms of processing, cleaved by SpeB protease; leading to loss of endoglucosidase activity. EndoS is produced and secreted prior to SpeB, suggesting that it is degraded after acting as a host immune evasion factor.

The protein resides in the secreted. The protein localises to the host extracellular space. The enzyme catalyses an N(4)-(oligosaccharide-(1-&gt;3)-[oligosaccharide-(1-&gt;6)]-beta-D-Man-(1-&gt;4)-beta-D-GlcNAc-(1-&gt;4)-alpha-D-GlcNAc)-L-asparaginyl-[protein] + H2O = an oligosaccharide-(1-&gt;3)-[oligosaccharide-(1-&gt;6)]-beta-D-Man-(1-&gt;4)-D-GlcNAc + N(4)-(N-acetyl-beta-D-glucosaminyl)-L-asparaginyl-[protein]. Its function is as follows. Endoglucosidase that acts as a host immune evasion factor by mediating hydrolysis of the N-linked glycan from the Fc region of host immunoglobulin-gamma (IgG) during infection. Specifically catalyzes the hydrolysis of the beta-1,4 linkage between the first two N-acetylglucosamine residues of the complex-type N-linked glycan located on 'Asn-297' of the Fc region of IgG antibodies (IGHG1, IGHG2, IGHG3 or IGHG4), thereby preventing interaction between IgGs and Fc receptors and ability to activate the complement pathway. Shows a specificity for biantennary complex type N-glycans; does neither cleave larger complex type glycans nor oligomannose and nor hybrid-type glycans. Specifically acts on IgGs; does not act on immunoglobulin alpha, beta, delta or mu. This chain is Endo-beta-N-acetylglucosaminidase EndoS, found in Streptococcus pyogenes serotype M1.